The chain runs to 1323 residues: PH domain leucine-rich repeat-containing protein phosphatase 2 (1323 aa).

The region spanning 150–248 (RILLSGIYNV…WQRQASKVVS (99 aa)) is the PH domain. LRR repeat units follow at residues 250-271 (RISTVDLSCYSLEEVPEHLFYS), 273-296 (DITYLNLRHNFMQLERPGGLDTLY), 300-321 (QLKGLNLSHNKLGLFPILLCEI), 323-344 (TLTELNLSCNGFHDLPSQIGNL), 346-368 (NLQTLCLDGNFLTTLPEELGNLQ), 369-390 (QLSSLGISFNNFSQIPEVYEKL), 392-412 (MLDRVVMAGNCLEVLNLGVLN), 416-439 (HIKHVDLRMNHLKTMVIENLEGNK), 440-460 (HITHVDLRDNRLTDLDLSSLC), 461-480 (SLEQLHCGRNQLRELTLSGF), 481-502 (SLRTLYASSNRLTAVNVYPVPS), 503-524 (LLTFLDLSRNLLECVPDWACEA), 526-547 (KIEVLDVSYNLLTEVPVRILSS), 549-570 (SLRKLMLGHNHVQNLPTLVEHI), 571-592 (PLEVLDLQHNALTRLPDTLFSK), 595-616 (NLRYLNASANSLESLPSACTGE), 621-644 (MLQLLYLTNNLLTDQCIPVLVGHL), 645-666 (HLRILHLANNQLQTFPASKLNK), 669-690 (QLEELNLSGNKLKTIPTTIANC), 692-713 (RLHTLVAHSNNISIFPEILQLP), 714-735 (QIQFVDLSCNDLTEILIPEALP), and 737-758 (TLQDLDLTGNTNLVLEHKTLDI). In terms of domain architecture, PPM-type phosphatase spans 785 to 1033 (SHGLAEMAGQ…DNVGAMVVYL (249 aa)). Positions 820, 821, 985, and 1024 each coordinate Mn(2+). The tract at residues 1060–1157 (TIKDAPKPAT…DSDDDQPVEG (98 aa)) is disordered. Residues 1071–1097 (SSSSGIASEFSSEMSTSEVSSEVGSTA) are compositionally biased toward low complexity. Polar residues predominate over residues 1122–1146 (PTPTSGLFQRQPSSATFSSNQSDNG). A Phosphoserine modification is found at Ser-1210. The tract at residues 1285-1323 (HDLEEEVKEQMKQHQDSRLEPEPHEEDRTEPPEEFDTAL) is disordered. Basic and acidic residues predominate over residues 1292-1315 (KEQMKQHQDSRLEPEPHEEDRTEP).

In terms of assembly, interacts with AKT1, AKT3 and PRKCB isoform beta-II. Interacts with STK4, RPS6KB1, RAF1. Interacts with FKBP5; FKBP5 acts as a scaffold for PHLPP2 and Akt. Interacts with NHERF1; NHERF1 scaffolds a heterotrimeric complex with PTEN. The cofactor is Mn(2+). As to expression, in colorectal cancer tissue, expression is highest in the surface epithelium of normal colonic mucosa adjacent to the cancer tissue but is largely excluded from the crypt bases. Expression is lost or significantly decreased in 80% of tested tumors (at protein level).

It is found in the cytoplasm. Its subcellular location is the membrane. The protein resides in the nucleus. The enzyme catalyses O-phospho-L-seryl-[protein] + H2O = L-seryl-[protein] + phosphate. It carries out the reaction O-phospho-L-threonyl-[protein] + H2O = L-threonyl-[protein] + phosphate. With respect to regulation, inhibited by AKT1, AKT2 and AKT3. Activated by oleic acid and arachidonic acid. In terms of biological role, protein phosphatase involved in regulation of Akt and PKC signaling. Mediates dephosphorylation in the C-terminal domain hydrophobic motif of members of the AGC Ser/Thr protein kinase family; specifically acts on 'Ser-473' of AKT1, 'Ser-660' of PRKCB isoform beta-II and 'Ser-657' of PRKCA. Akt regulates the balance between cell survival and apoptosis through a cascade that primarily alters the function of transcription factors that regulate pro- and antiapoptotic genes. Dephosphorylation of 'Ser-473' of Akt triggers apoptosis and decreases cell proliferation. Also controls the phosphorylation of AKT3. Dephosphorylates STK4 on 'Thr-387' leading to STK4 activation and apoptosis. Dephosphorylates RPS6KB1 and is involved in regulation of cap-dependent translation. Inhibits cancer cell proliferation and may act as a tumor suppressor. Dephosphorylation of PRKCA and PRKCB leads to their destabilization and degradation. Dephosphorylates RAF1 inhibiting its kinase activity. The protein is PH domain leucine-rich repeat-containing protein phosphatase 2 (PHLPP2) of Homo sapiens (Human).